Consider the following 1368-residue polypeptide: DNA-directed RNA polymerase subunit beta' (1368 aa).

Residues 1-38 (MTSSSKPARKTSKSKSKASKAAEAPAAPSNELSREAPT) are disordered. Residues 7 to 18 (PARKTSKSKSKA) show a composition bias toward basic residues. Over residues 19 to 29 (SKAAEAPAAPS) the composition is skewed to low complexity. Positions 250, 318, 325, and 328 each coordinate Zn(2+). The tract at residues 1340–1368 (AGEELAEEHVPDPGALEGLQEEGLLSQDS) is disordered. A compositionally biased stretch (low complexity) spans 1353 to 1368 (GALEGLQEEGLLSQDS).

The protein belongs to the RNA polymerase beta' chain family. RpoC2 subfamily. As to quaternary structure, in cyanobacteria the RNAP catalytic core is composed of 2 alpha, 1 beta, 1 beta', 1 gamma and 1 omega subunit. When a sigma factor is associated with the core the holoenzyme is formed, which can initiate transcription. It depends on Zn(2+) as a cofactor.

The enzyme catalyses RNA(n) + a ribonucleoside 5'-triphosphate = RNA(n+1) + diphosphate. Its function is as follows. DNA-dependent RNA polymerase catalyzes the transcription of DNA into RNA using the four ribonucleoside triphosphates as substrates. This Synechococcus sp. (strain RCC307) protein is DNA-directed RNA polymerase subunit beta'.